The sequence spans 133 residues: Snaclec purpureotin subunit alpha (133 aa).

Cystine bridges form between C2–C13, C30–C127, and C102–C119. Residues 9-128 (FKQYCYQIIK…CEQKHIFMCK (120 aa)) form the C-type lectin domain.

It belongs to the snaclec family. As to quaternary structure, homodimer (non-covalently linked) of heterodimer of alpha and beta subunits (disulfide-linked). In terms of tissue distribution, expressed by the venom gland.

The protein localises to the secreted. Functionally, snaclec that induces platelet aggregation without any cofactor in a dose-dependent manner. Its platelet aggregation effect is blocked by echicetin, suggesting it is a GPIb-binding protein which binds to the same or a closely related GPIb site on platelets as echicetin. The sequence is that of Snaclec purpureotin subunit alpha from Trimeresurus purpureomaculatus (Mangrove pit viper).